A 266-amino-acid polypeptide reads, in one-letter code: Orcokinin peptides type B (266 aa).

The first 20 residues, 1–20 (MTAQMFTIALLLSLSAIAAA), serve as a signal peptide directing secretion. 3 consecutive propeptides follow at residues 21–46 (GTIKTAPARTPSTQDDASFPPDGAPV), 240–246 (DYDVFPD), and 264–266 (NVE).

The protein belongs to the orcokinin family.

It is found in the secreted. Myotropic peptides that enhance both the frequency and amplitude of spontaneous hindgut contractions. The sequence is that of Orcokinin peptides type B from Procambarus clarkii (Red swamp crayfish).